A 326-amino-acid polypeptide reads, in one-letter code: Protein-arginine N-acetylglucosaminyltransferase NleB2 (326 aa).

UDP-N-acetyl-alpha-D-glucosamine-binding positions include 45 to 47 (QWF), tyrosine 69, and 216 to 219 (YLDM). The DXD motif motif lies at 218–220 (DMD). Residue aspartate 220 coordinates Mn(2+). The Proton acceptor role is filled by glutamate 250. Positions 317 and 319 each coordinate Mn(2+). Residues serine 319 and 324–326 (SSW) each bind UDP-N-acetyl-alpha-D-glucosamine.

The protein belongs to the glycosyltransferase NleB family. It depends on Mn(2+) as a cofactor.

Its subcellular location is the secreted. It is found in the host cell. The catalysed reaction is L-arginyl-[protein] + UDP-N-acetyl-alpha-D-glucosamine = N(omega)-(N-acetyl-beta-D-glucosaminyl)-L-arginyl-[protein] + UDP + H(+). In terms of biological role, protein-arginine N-acetylglucosaminyltransferase effector that catalyzes the transfer of a single N-acetylglucosamine (GlcNAc) to a conserved arginine residue of host target proteins. In contrast to NleB1, not able to disrupt TNF signaling in infected cells. Shows a lower enzymatic activity than NleB1. This is Protein-arginine N-acetylglucosaminyltransferase NleB2 from Escherichia coli O127:H6 (strain E2348/69 / EPEC).